The sequence spans 168 residues: MEAAKKQSVTNQLLAVKSASGKTFSQLAAETGLTNVYVAQLLRRQAQLKPDTVPKLKEALPALTDELIGDMMSPPWRSYDPNLIQEPTIYRLNEAVMHFGESIKEIINEDFGDGIMSAIDFYCSVDKIKGVDGNNRVVVTLDGKYLSHSEQRTENMVSRLNLKGGTSE.

Active-site residues include Arg-91, Glu-94, and Ser-117.

The protein belongs to the cyanase family.

The enzyme catalyses cyanate + hydrogencarbonate + 3 H(+) = NH4(+) + 2 CO2. In terms of biological role, catalyzes the reaction of cyanate with bicarbonate to produce ammonia and carbon dioxide. In Arabidopsis thaliana (Mouse-ear cress), this protein is Cyanate hydratase.